The sequence spans 384 residues: 1-deoxy-D-xylulose 5-phosphate reductoisomerase (384 aa).

NADPH-binding residues include T10, G11, S12, I13, G36, N38, and N122. K123 contacts 1-deoxy-D-xylulose 5-phosphate. NADPH is bound at residue E124. A Mn(2+)-binding site is contributed by D148. 1-deoxy-D-xylulose 5-phosphate-binding residues include S149, E150, S174, and H197. E150 contributes to the Mn(2+) binding site. Residue G203 participates in NADPH binding. 1-deoxy-D-xylulose 5-phosphate is bound by residues S210, N215, K216, and E219. E219 is a binding site for Mn(2+).

This sequence belongs to the DXR family. It depends on Mg(2+) as a cofactor. The cofactor is Mn(2+).

It carries out the reaction 2-C-methyl-D-erythritol 4-phosphate + NADP(+) = 1-deoxy-D-xylulose 5-phosphate + NADPH + H(+). The protein operates within isoprenoid biosynthesis; isopentenyl diphosphate biosynthesis via DXP pathway; isopentenyl diphosphate from 1-deoxy-D-xylulose 5-phosphate: step 1/6. Functionally, catalyzes the NADPH-dependent rearrangement and reduction of 1-deoxy-D-xylulose-5-phosphate (DXP) to 2-C-methyl-D-erythritol 4-phosphate (MEP). This chain is 1-deoxy-D-xylulose 5-phosphate reductoisomerase, found in Geobacter metallireducens (strain ATCC 53774 / DSM 7210 / GS-15).